We begin with the raw amino-acid sequence, 215 residues long: MSKVYDWFEERLEIQAIADDITSKYVPPHVNIFYCLGGITLTCFLVQVATGFAMTFYYRPTVTEAFSSVQYIMTEANFGWLIRSVHRWSASMMVLMMILHVFRVYLTGGFKKPRELTWVTGVVLAVLTASFGVTGYSLPWDQIGYWAVKIVTGVPDAIPVIGSPLVELLRGSASVGQSTLTRFYSLHTFVLPLLTAVFMLMHFLMIRKQGISGPL.

Residues 32-52 (IFYCLGGITLTCFLVQVATGF) traverse the membrane as a helical segment. Cysteine 35 contributes to the heme c binding site. Heme b contacts are provided by histidine 86 and histidine 100. Helical transmembrane passes span 90-110 (ASMM…TGGF), 116-136 (LTWV…VTGY), and 186-206 (LHTF…FLMI). Residues histidine 187 and histidine 202 each contribute to the heme b site.

Belongs to the cytochrome b family. PetB subfamily. The 4 large subunits of the cytochrome b6-f complex are cytochrome b6, subunit IV (17 kDa polypeptide, PetD), cytochrome f and the Rieske protein, while the 4 small subunits are PetG, PetL, PetM and PetN. The complex functions as a dimer. The cofactor is heme b. Heme c serves as cofactor.

The protein resides in the plastid. It is found in the chloroplast thylakoid membrane. Its function is as follows. Component of the cytochrome b6-f complex, which mediates electron transfer between photosystem II (PSII) and photosystem I (PSI), cyclic electron flow around PSI, and state transitions. The sequence is that of Cytochrome b6 from Hordeum vulgare (Barley).